The chain runs to 277 residues: Sulfur carrier protein FdhD (277 aa).

The active-site Cysteine persulfide intermediate is cysteine 123. 263-268 (FVRGNK) lines the Mo-bis(molybdopterin guanine dinucleotide) pocket.

It belongs to the FdhD family.

It localises to the cytoplasm. Functionally, required for formate dehydrogenase (FDH) activity. Acts as a sulfur carrier protein that transfers sulfur from IscS to the molybdenum cofactor prior to its insertion into FDH. In Corynebacterium efficiens (strain DSM 44549 / YS-314 / AJ 12310 / JCM 11189 / NBRC 100395), this protein is Sulfur carrier protein FdhD.